Reading from the N-terminus, the 348-residue chain is Fe-S cluster assembly protein DRE2 (348 aa).

Residues 1 to 162 (MSQYKTGLLL…KKASSSTSNL (162 aa)) form an N-terminal SAM-like domain region. The tract at residues 137–170 (KTNNTKLQSGSKLPTFKKASSSTSNLPSFKKADH) is disordered. Positions 144–163 (QSGSKLPTFKKASSSTSNLP) are enriched in polar residues. Residues 163–242 (PSFKKADHSR…EEELIDEDGS (80 aa)) form a linker region. Serine 206 carries the phosphoserine modification. [2Fe-2S] cluster-binding residues include cysteine 252, cysteine 263, cysteine 266, and cysteine 268. Residues 252–268 (CGKSKTKKKKACKDCTC) are fe-S binding site A. [4Fe-4S] cluster is bound by residues cysteine 311, cysteine 314, cysteine 322, and cysteine 325. 2 short sequence motifs (cx2C motif) span residues 311-314 (CGSC) and 322-325 (CSGC). Residues 311 to 325 (CGSCSLGDAFRCSGC) are fe-S binding site B.

It belongs to the anamorsin family. As to quaternary structure, monomer. Interacts with TAH18. Interacts with MIA40. [2Fe-2S] cluster serves as cofactor. The cofactor is [4Fe-4S] cluster.

Its subcellular location is the cytoplasm. It localises to the mitochondrion intermembrane space. Component of the cytosolic iron-sulfur (Fe-S) protein assembly (CIA) machinery required for the maturation of extramitochondrial Fe-S proteins. Part of an electron transfer chain functioning in an early step of cytosolic Fe-S biogenesis, facilitating the de novo assembly of a [4Fe-4S] cluster on the scaffold complex CFD1-NBP35. Electrons are transferred to DRE2 from NADPH via the FAD- and FMN-containing protein TAH18. TAH18-DRE2 are also required for the assembly of the diferric tyrosyl radical cofactor of ribonucleotide reductase (RNR), probably by providing electrons for reduction during radical cofactor maturation in the catalytic small subunit RNR2. This chain is Fe-S cluster assembly protein DRE2, found in Saccharomyces cerevisiae (strain Lalvin EC1118 / Prise de mousse) (Baker's yeast).